A 135-amino-acid polypeptide reads, in one-letter code: Small ribosomal subunit protein uS12 (135 aa).

The segment at M1 to L24 is disordered. Basic residues predominate over residues R9–K18. At D102 the chain carries 3-methylthioaspartic acid.

This sequence belongs to the universal ribosomal protein uS12 family. As to quaternary structure, part of the 30S ribosomal subunit. Contacts proteins S8 and S17. May interact with IF1 in the 30S initiation complex.

With S4 and S5 plays an important role in translational accuracy. Functionally, interacts with and stabilizes bases of the 16S rRNA that are involved in tRNA selection in the A site and with the mRNA backbone. Located at the interface of the 30S and 50S subunits, it traverses the body of the 30S subunit contacting proteins on the other side and probably holding the rRNA structure together. The combined cluster of proteins S8, S12 and S17 appears to hold together the shoulder and platform of the 30S subunit. The sequence is that of Small ribosomal subunit protein uS12 from Lactobacillus delbrueckii subsp. bulgaricus (strain ATCC 11842 / DSM 20081 / BCRC 10696 / JCM 1002 / NBRC 13953 / NCIMB 11778 / NCTC 12712 / WDCM 00102 / Lb 14).